We begin with the raw amino-acid sequence, 727 residues long: NADH-ubiquinone oxidoreductase 75 kDa subunit, mitochondrial (727 aa).

Residues 1–23 (MLRIPIKRALIGLSNSPKGYVRT) constitute a mitochondrion transit peptide. Residues 30 to 108 (NLIEVFVDGQ…GWNILTNSEK (79 aa)) enclose the 2Fe-2S ferredoxin-type domain. Residues cysteine 64, cysteine 75, and cysteine 78 each coordinate [2Fe-2S] cluster. Lysine 84 carries the N6-acetyllysine modification. Cysteine 92 provides a ligand contact to [2Fe-2S] cluster. In terms of domain architecture, 4Fe-4S His(Cys)3-ligated-type spans 108-147 (KSKKAREGVMEFLLANHPLDCPICDQGGECDLQDQSMMFG). Residues histidine 124, cysteine 128, cysteine 131, cysteine 137, cysteine 176, cysteine 179, cysteine 182, and cysteine 226 each contribute to the [4Fe-4S] cluster site. A 4Fe-4S Mo/W bis-MGD-type domain is found at 245-301 (TRKTESIDVMDAVGSNIVVSTRTGEVMRILPRMHEDINEEWISDKTRFAYDGLKRQR). Phosphoserine is present on serine 461. Lysine 467, lysine 499, and lysine 709 each carry N6-acetyllysine.

The protein belongs to the complex I 75 kDa subunit family. In terms of assembly, core subunit of respiratory chain NADH dehydrogenase (Complex I) which is composed of 45 different subunits. This is the largest subunit of complex I and it is a component of the iron-sulfur (IP) fragment of the enzyme. Complex I associates with ubiquinol-cytochrome reductase complex (Complex III) to form supercomplexes. In astrocytes, less complex I is assembled into supercomplexes as compared to neurons. Interacts with MDM2. Interacts with AKAP1. [2Fe-2S] cluster serves as cofactor. [4Fe-4S] cluster is required as a cofactor. Post-translationally, acetylation of Lys-84 is observed in liver mitochondria from fasted mice but not from fed mice. Brain. More abundant in neurons than in astrocytes (at protein level).

The protein localises to the mitochondrion inner membrane. The catalysed reaction is a ubiquinone + NADH + 5 H(+)(in) = a ubiquinol + NAD(+) + 4 H(+)(out). Its function is as follows. Core subunit of the mitochondrial membrane respiratory chain NADH dehydrogenase (Complex I) which catalyzes electron transfer from NADH through the respiratory chain, using ubiquinone as an electron acceptor. Essential for catalysing the entry and efficient transfer of electrons within complex I. Plays a key role in the assembly and stability of complex I and participates in the association of complex I with ubiquinol-cytochrome reductase complex (Complex III) to form supercomplexes. This Mus musculus (Mouse) protein is NADH-ubiquinone oxidoreductase 75 kDa subunit, mitochondrial (Ndufs1).